The sequence spans 510 residues: Serine carboxypeptidase-like 48 (510 aa).

A signal peptide spans 1 to 25; sequence MDSKTTFLTFLLCIFIFSHFSPSTS. Intrachain disulfides connect C141–C383, C309–C326, and C349–C354. 2 N-linked (GlcNAc...) asparagine glycosylation sites follow: N158 and N159. The active site involves S231. Residues D421 and H478 contribute to the active site.

This sequence belongs to the peptidase S10 family. As to expression, ubiquitous.

The protein resides in the secreted. Its function is as follows. Probable carboxypeptidase. The protein is Serine carboxypeptidase-like 48 (SCPL48) of Arabidopsis thaliana (Mouse-ear cress).